The primary structure comprises 246 residues: UDP-N-acetyl-D-mannosaminuronic acid transferase (246 aa).

Belongs to the glycosyltransferase 26 family.

It carries out the reaction UDP-N-acetyl-alpha-D-mannosaminouronate + N-acetyl-alpha-D-glucosaminyl-di-trans,octa-cis-undecaprenyl diphosphate = beta-D-ManNAcA-(1-&gt;4)-alpha-D-GlcNAc-di-trans,octa-cis-undecaprenyl diphosphate + UDP + H(+). Its pathway is bacterial outer membrane biogenesis; enterobacterial common antigen biosynthesis. In terms of biological role, catalyzes the synthesis of Und-PP-GlcNAc-ManNAcA (Lipid II), the second lipid-linked intermediate involved in enterobacterial common antigen (ECA) synthesis. The chain is UDP-N-acetyl-D-mannosaminuronic acid transferase from Escherichia coli (strain ATCC 8739 / DSM 1576 / NBRC 3972 / NCIMB 8545 / WDCM 00012 / Crooks).